A 332-amino-acid chain; its full sequence is Ketol-acid reductoisomerase (NADP(+)) (332 aa).

One can recognise a KARI N-terminal Rossmann domain in the interval 1–182 (MATIYYEKDA…GCTRAGVLAT (182 aa)). NADP(+)-binding positions include 25–28 (YGSQ), arginine 48, serine 53, and 83–86 (DELQ). Residue histidine 108 is part of the active site. Position 134 (glycine 134) interacts with NADP(+). Residues 183–328 (TFKEETETDL…KELRSMMPWL (146 aa)) form the KARI C-terminal knotted domain. Mg(2+) is bound by residues aspartate 191, glutamate 195, glutamate 227, and glutamate 231. A substrate-binding site is contributed by serine 252.

It belongs to the ketol-acid reductoisomerase family. Mg(2+) serves as cofactor.

The enzyme catalyses (2R)-2,3-dihydroxy-3-methylbutanoate + NADP(+) = (2S)-2-acetolactate + NADPH + H(+). It carries out the reaction (2R,3R)-2,3-dihydroxy-3-methylpentanoate + NADP(+) = (S)-2-ethyl-2-hydroxy-3-oxobutanoate + NADPH + H(+). Its pathway is amino-acid biosynthesis; L-isoleucine biosynthesis; L-isoleucine from 2-oxobutanoate: step 2/4. It functions in the pathway amino-acid biosynthesis; L-valine biosynthesis; L-valine from pyruvate: step 2/4. Its function is as follows. Involved in the biosynthesis of branched-chain amino acids (BCAA). Catalyzes an alkyl-migration followed by a ketol-acid reduction of (S)-2-acetolactate (S2AL) to yield (R)-2,3-dihydroxy-isovalerate. In the isomerase reaction, S2AL is rearranged via a Mg-dependent methyl migration to produce 3-hydroxy-3-methyl-2-ketobutyrate (HMKB). In the reductase reaction, this 2-ketoacid undergoes a metal-dependent reduction by NADPH to yield (R)-2,3-dihydroxy-isovalerate. The polypeptide is Ketol-acid reductoisomerase (NADP(+)) (Methanocella arvoryzae (strain DSM 22066 / NBRC 105507 / MRE50)).